The following is a 142-amino-acid chain: MSTFSAKPAEVQHEWFVIDATDKVLGRVASEVALRLRGKHKAIYTPHVDTGDFIVIINASKLKVTGTKNLDKVYYRHSGFPGGITATNFRDMQAKFPGRALEKAVKGMLPKGPLGYAMIKKLKVYGGAEHPHTAQQPKALEI.

The protein belongs to the universal ribosomal protein uL13 family. In terms of assembly, part of the 50S ribosomal subunit.

This protein is one of the early assembly proteins of the 50S ribosomal subunit, although it is not seen to bind rRNA by itself. It is important during the early stages of 50S assembly. The polypeptide is Large ribosomal subunit protein uL13 (Delftia acidovorans (strain DSM 14801 / SPH-1)).